A 528-amino-acid chain; its full sequence is U3 small nucleolar RNA-associated protein 15 homolog (528 aa).

The residue at position 2 (alanine 2) is an N-acetylalanine. WD repeat units follow at residues 36–75, 78–117, 120–159, 162–202, 204–242, 246–285, and 287–326; these read KEFG…PVKT, RFKD…PLRQ, GHTK…EILT, EHSD…NVLC, EHGQ…QLLV, NHHK…VVHS, and DYAA…KKES. A Glycyl lysine isopeptide (Lys-Gly) (interchain with G-Cter in SUMO2) cross-link involves residue lysine 249. Positions 508–528 are disordered; that stretch reads AELPEEKTESPRQPSDTDKNS. The span at 511-528 shows a compositional bias: basic and acidic residues; it reads PEEKTESPRQPSDTDKNS.

In terms of assembly, part of the small subunit (SSU) processome, composed of more than 70 proteins and the RNA chaperone small nucleolar RNA (snoRNA) U3. May be a component of the proposed t-UTP subcomplex of the ribosomal small subunit (SSU) processome containing at least UTP4, WDR43, HEATR1, UTP15, WDR75. Interacts directly with UTP4 and WDR43.

It localises to the nucleus. The protein resides in the nucleolus. Functionally, ribosome biogenesis factor. Involved in nucleolar processing of pre-18S ribosomal RNA. Required for optimal pre-ribosomal RNA transcription by RNA polymerase I. Part of the small subunit (SSU) processome, first precursor of the small eukaryotic ribosomal subunit. During the assembly of the SSU processome in the nucleolus, many ribosome biogenesis factors, an RNA chaperone and ribosomal proteins associate with the nascent pre-rRNA and work in concert to generate RNA folding, modifications, rearrangements and cleavage as well as targeted degradation of pre-ribosomal RNA by the RNA exosome. The protein is U3 small nucleolar RNA-associated protein 15 homolog of Rattus norvegicus (Rat).